The primary structure comprises 621 residues: Ubiquitin carboxyl-terminal hydrolase MINDY-2 (621 aa).

2 disordered regions span residues 1–106 (MESS…RGQY) and 119–179 (VGHE…LESF). S94 carries the post-translational modification Phosphoserine. The span at 145-163 (AAGSEEPSSAGGLSSSCSD) shows a compositional bias: low complexity. The active-site Nucleophile is C266. The active-site Proton acceptor is H448. The ubiquitin-binding domain (UBD) stretch occupies residues 507–559 (GQQDQIDQDYLMALSLQQEQQSQEINWEQIPEGISDLELAKKLQEEEDRRASQ). Residues 556-621 (RASQYYQEQE…EKEKNSCVIL (66 aa)) are disordered. Over residues 558–591 (SQYYQEQEQAAAAAAAASTQAQQGQPAQASPSSG) the composition is skewed to low complexity. The segment covering 597–621 (SERKRKEPREKDKEKEKEKNSCVIL) has biased composition (basic and acidic residues).

Belongs to the MINDY deubiquitinase family. FAM63 subfamily.

It catalyses the reaction Thiol-dependent hydrolysis of ester, thioester, amide, peptide and isopeptide bonds formed by the C-terminal Gly of ubiquitin (a 76-residue protein attached to proteins as an intracellular targeting signal).. In terms of biological role, hydrolase that can remove 'Lys-48'-linked conjugated ubiquitin from proteins. Binds to polyubiquitin chains of different linkage types, including 'Lys-6', 'Lys-11', 'Lys-29', 'Lys-33', 'Lys-48' and 'Lys-63'. May play a regulatory role at the level of protein turnover. This is Ubiquitin carboxyl-terminal hydrolase MINDY-2 from Homo sapiens (Human).